A 629-amino-acid chain; its full sequence is Pentatricopeptide repeat-containing protein At1g63150 (629 aa).

PPR repeat units lie at residues Ala46–Pro81, Ser82–His116, Asp117–Pro151, Asp152–Pro186, Asp187–Pro221, Asp222–Ala256, Asn257–Pro291, Asn292–Pro326, Asn327–Pro361, Asp362–Pro396, Asn397–Gly431, Asn432–Thr466, Asp467–Leu501, Asn502–Lys532, Asp534–Pro568, and Asn569–Gly603.

This sequence belongs to the PPR family. P subfamily.

The polypeptide is Pentatricopeptide repeat-containing protein At1g63150 (Arabidopsis thaliana (Mouse-ear cress)).